Consider the following 156-residue polypeptide: Small ribosomal subunit protein uS7 (156 aa).

This sequence belongs to the universal ribosomal protein uS7 family. In terms of assembly, part of the 30S ribosomal subunit. Contacts proteins S9 and S11.

In terms of biological role, one of the primary rRNA binding proteins, it binds directly to 16S rRNA where it nucleates assembly of the head domain of the 30S subunit. Is located at the subunit interface close to the decoding center, probably blocks exit of the E-site tRNA. This Streptococcus uberis (strain ATCC BAA-854 / 0140J) protein is Small ribosomal subunit protein uS7.